A 423-amino-acid polypeptide reads, in one-letter code: Glutamyl-tRNA reductase (423 aa).

Substrate-binding positions include 49-52 (TCNR), S106, 111-113 (EPQ), and Q117. The active-site Nucleophile is C50. 186–191 (GAGDTS) is a binding site for NADP(+).

The protein belongs to the glutamyl-tRNA reductase family. As to quaternary structure, homodimer.

The catalysed reaction is (S)-4-amino-5-oxopentanoate + tRNA(Glu) + NADP(+) = L-glutamyl-tRNA(Glu) + NADPH + H(+). The protein operates within porphyrin-containing compound metabolism; protoporphyrin-IX biosynthesis; 5-aminolevulinate from L-glutamyl-tRNA(Glu): step 1/2. Its function is as follows. Catalyzes the NADPH-dependent reduction of glutamyl-tRNA(Glu) to glutamate 1-semialdehyde (GSA). This is Glutamyl-tRNA reductase from Idiomarina loihiensis (strain ATCC BAA-735 / DSM 15497 / L2-TR).